The following is a 123-amino-acid chain: D-ribose pyranase (123 aa).

Catalysis depends on histidine 20, which acts as the Proton donor. Substrate is bound by residues aspartate 28, histidine 90, and 112 to 114; that span reads YAN.

This sequence belongs to the RbsD / FucU family. RbsD subfamily. As to quaternary structure, homodecamer.

The protein resides in the cytoplasm. The catalysed reaction is beta-D-ribopyranose = beta-D-ribofuranose. It participates in carbohydrate metabolism; D-ribose degradation; D-ribose 5-phosphate from beta-D-ribopyranose: step 1/2. Functionally, catalyzes the interconversion of beta-pyran and beta-furan forms of D-ribose. The polypeptide is D-ribose pyranase (Corynebacterium glutamicum (strain ATCC 13032 / DSM 20300 / JCM 1318 / BCRC 11384 / CCUG 27702 / LMG 3730 / NBRC 12168 / NCIMB 10025 / NRRL B-2784 / 534)).